Reading from the N-terminus, the 306-residue chain is Homoserine O-acetyltransferase (306 aa).

Catalysis depends on C142, which acts as the Acyl-thioester intermediate. Positions 163 and 194 each coordinate substrate. The active-site Proton acceptor is H237. E239 is an active-site residue. R251 lines the substrate pocket.

This sequence belongs to the MetA family.

The protein localises to the cytoplasm. The enzyme catalyses L-homoserine + acetyl-CoA = O-acetyl-L-homoserine + CoA. The protein operates within amino-acid biosynthesis; L-methionine biosynthesis via de novo pathway; O-acetyl-L-homoserine from L-homoserine: step 1/1. Transfers an acetyl group from acetyl-CoA to L-homoserine, forming acetyl-L-homoserine. The chain is Homoserine O-acetyltransferase from Clostridium tetani (strain Massachusetts / E88).